The chain runs to 345 residues: Opioid-binding protein/cell adhesion molecule (345 aa).

Positions Met-1 to Thr-27 are cleaved as a signal peptide. Ig-like C2-type domains lie at Pro-39–Ser-126, Pro-136–Thr-219, and Pro-223–Thr-310. Residues Asn-44, Asn-70, and Asn-140 are each glycosylated (N-linked (GlcNAc...) asparagine). The cysteines at positions 57 and 115 are disulfide-linked. 2 disulfide bridges follow: Cys-157–Cys-202 and Cys-244–Cys-296. N-linked (GlcNAc...) asparagine glycosylation is found at Asn-285, Asn-293, and Asn-306. Residue Asn-322 is the site of GPI-anchor amidated asparagine attachment. Positions Ser-323–Phe-345 are cleaved as a propeptide — removed in mature form.

It belongs to the immunoglobulin superfamily. IgLON family.

The protein localises to the cell membrane. In terms of biological role, binds opioids in the presence of acidic lipids; probably involved in cell contact. In Rattus norvegicus (Rat), this protein is Opioid-binding protein/cell adhesion molecule (Opcml).